Reading from the N-terminus, the 118-residue chain is Large ribosomal subunit protein bL19 (118 aa).

The protein belongs to the bacterial ribosomal protein bL19 family.

Functionally, this protein is located at the 30S-50S ribosomal subunit interface and may play a role in the structure and function of the aminoacyl-tRNA binding site. This chain is Large ribosomal subunit protein bL19, found in Coprothermobacter proteolyticus (strain ATCC 35245 / DSM 5265 / OCM 4 / BT).